We begin with the raw amino-acid sequence, 314 residues long: Homoserine O-succinyltransferase (314 aa).

The Acyl-thioester intermediate role is filled by C142. 2 residues coordinate substrate: K163 and S192. H235 serves as the catalytic Proton acceptor. E237 is an active-site residue. R249 contacts substrate.

This sequence belongs to the MetA family.

Its subcellular location is the cytoplasm. The enzyme catalyses L-homoserine + succinyl-CoA = O-succinyl-L-homoserine + CoA. It functions in the pathway amino-acid biosynthesis; L-methionine biosynthesis via de novo pathway; O-succinyl-L-homoserine from L-homoserine: step 1/1. In terms of biological role, transfers a succinyl group from succinyl-CoA to L-homoserine, forming succinyl-L-homoserine. This is Homoserine O-succinyltransferase from Aeromonas salmonicida (strain A449).